Consider the following 122-residue polypeptide: Large ribosomal subunit protein uL14c (122 aa).

This sequence belongs to the universal ribosomal protein uL14 family. As to quaternary structure, part of the 50S ribosomal subunit.

It localises to the plastid. The protein localises to the chloroplast. In terms of biological role, binds to 23S rRNA. The sequence is that of Large ribosomal subunit protein uL14c from Lactuca sativa (Garden lettuce).